The following is a 522-amino-acid chain: Lysine--tRNA ligase (522 aa).

The 'HIGH' region signature appears at 44–52 (PSGLPHIGT). Residues 290–294 (KISKS) carry the 'KMSKS' region motif. Residue Lys-293 coordinates ATP.

It belongs to the class-I aminoacyl-tRNA synthetase family.

The protein resides in the cytoplasm. The enzyme catalyses tRNA(Lys) + L-lysine + ATP = L-lysyl-tRNA(Lys) + AMP + diphosphate. This Rickettsia bellii (strain OSU 85-389) protein is Lysine--tRNA ligase.